Consider the following 180-residue polypeptide: tRNA (cytidine(56)-2'-O)-methyltransferase (180 aa).

Residues L82, 112–116 (GAEKV), and 130–137 (VGNQPHSE) contribute to the S-adenosyl-L-methionine site.

Belongs to the aTrm56 family. Homodimer.

It is found in the cytoplasm. It carries out the reaction cytidine(56) in tRNA + S-adenosyl-L-methionine = 2'-O-methylcytidine(56) in tRNA + S-adenosyl-L-homocysteine + H(+). In terms of biological role, specifically catalyzes the AdoMet-dependent 2'-O-ribose methylation of cytidine at position 56 in tRNAs. This Methanococcus vannielii (strain ATCC 35089 / DSM 1224 / JCM 13029 / OCM 148 / SB) protein is tRNA (cytidine(56)-2'-O)-methyltransferase.